Reading from the N-terminus, the 221-residue chain is Ependymin-2 (221 aa).

An N-terminal signal peptide occupies residues 1–21; that stretch reads MQDFAFAALSIWLCLGATALA. N-linked (GlcNAc...) asparagine glycans are attached at residues Asn-33, Asn-73, and Asn-97.

This sequence belongs to the ependymin family. Binds calcium through the terminal sialic acids. As to expression, EPDs are synthesized in the meninx and secreted in the cerebrospinal fluid.

It is found in the secreted. May play a role in neural plasticity. May be involved during axon regeneration. The sequence is that of Ependymin-2 (epd2) from Salmo salar (Atlantic salmon).